Consider the following 224-residue polypeptide: Redox-sensing transcriptional repressor Rex (224 aa).

Positions 17–56 (RYHRYLEELLKNDVKRISSRELSEKMGVTASQIRQDLNNF) form a DNA-binding region, H-T-H motif. NAD(+) is bound at residue 91 to 96 (GAGNLG).

Belongs to the transcriptional regulatory Rex family. As to quaternary structure, homodimer.

It localises to the cytoplasm. Functionally, modulates transcription in response to changes in cellular NADH/NAD(+) redox state. In Thermoanaerobacter pseudethanolicus (strain ATCC 33223 / 39E) (Clostridium thermohydrosulfuricum), this protein is Redox-sensing transcriptional repressor Rex.